Reading from the N-terminus, the 112-residue chain is MTRVKRGNVSRKRHKKILNMSKGFRGAASTLFRTANQQNMKALRYSYRNRRQKKRDFRRMWITRVNSAVRRYGLNYSEFMNYLKTHKIQLNRKVIAQLSICDPEAFMQLLLF.

It belongs to the bacterial ribosomal protein bL20 family.

The protein resides in the plastid. It is found in the chloroplast. Binds directly to 23S ribosomal RNA and is necessary for the in vitro assembly process of the 50S ribosomal subunit. It is not involved in the protein synthesizing functions of that subunit. The chain is Large ribosomal subunit protein bL20c (rpl20) from Chlamydomonas reinhardtii (Chlamydomonas smithii).